Reading from the N-terminus, the 174-residue chain is ATP synthase subunit b 2 (174 aa).

The chain crosses the membrane as a helical span at residues 27-47 (IFWLIITLVAIYLILTKVALP).

The protein belongs to the ATPase B chain family. In terms of assembly, F-type ATPases have 2 components, F(1) - the catalytic core - and F(0) - the membrane proton channel. F(1) has five subunits: alpha(3), beta(3), gamma(1), delta(1), epsilon(1). F(0) has three main subunits: a(1), b(2) and c(10-14). The alpha and beta chains form an alternating ring which encloses part of the gamma chain. F(1) is attached to F(0) by a central stalk formed by the gamma and epsilon chains, while a peripheral stalk is formed by the delta and b chains.

It is found in the cell inner membrane. In terms of biological role, f(1)F(0) ATP synthase produces ATP from ADP in the presence of a proton or sodium gradient. F-type ATPases consist of two structural domains, F(1) containing the extramembraneous catalytic core and F(0) containing the membrane proton channel, linked together by a central stalk and a peripheral stalk. During catalysis, ATP synthesis in the catalytic domain of F(1) is coupled via a rotary mechanism of the central stalk subunits to proton translocation. Its function is as follows. Component of the F(0) channel, it forms part of the peripheral stalk, linking F(1) to F(0). The b'-subunit is a diverged and duplicated form of b found in plants and photosynthetic bacteria. This Dinoroseobacter shibae (strain DSM 16493 / NCIMB 14021 / DFL 12) protein is ATP synthase subunit b 2 (atpF2).